The following is a 338-amino-acid chain: Phenylalanine--tRNA ligase alpha subunit (338 aa).

A Mg(2+)-binding site is contributed by Glu252.

It belongs to the class-II aminoacyl-tRNA synthetase family. Phe-tRNA synthetase alpha subunit type 1 subfamily. In terms of assembly, tetramer of two alpha and two beta subunits. The cofactor is Mg(2+).

The protein resides in the cytoplasm. It carries out the reaction tRNA(Phe) + L-phenylalanine + ATP = L-phenylalanyl-tRNA(Phe) + AMP + diphosphate + H(+). This is Phenylalanine--tRNA ligase alpha subunit from Pseudomonas aeruginosa (strain ATCC 15692 / DSM 22644 / CIP 104116 / JCM 14847 / LMG 12228 / 1C / PRS 101 / PAO1).